The sequence spans 76 residues: MADFDQELDASGLNCPLPILRAKKTLNAMSSGQVLHVIATDPGSVKDFDAFAKQTGNELMESKEEGGKFHFLIKKS.

Catalysis depends on C15, which acts as the Cysteine persulfide intermediate.

It belongs to the sulfur carrier protein TusA family. Mostly a monomer, a small portion forms homodimer via intermolecular disulfide bonds. Tightly interacts with DsrEFH.

It localises to the cytoplasm. It participates in energy metabolism; sulfur metabolism. In terms of biological role, sulfur carrier protein involved in sulfur trafficking for oxidative dissimilatory sulfur metabolism. Component of a sulfur relay system that starts with the sulfur-mobilizing rhodanese-like protein Rhd_2599 (Alvin_2599), which transfers the sulfur from a low-molecular-weight thiol, maybe glutathione, to the TusA protein (Alvin_2600); TusA serves as the sulfur donor for DsrEFH, which persulfurates DsrC; persulfurated DsrC very probably serves as a direct substrate for reverse-acting sulfite reductase, DsrAB. TusA seems to be not exclusively dedicated to sulfur oxidation and may have other important roles in the cell. Might also act as a sulfur mediator required for 2-thiouridine formation of tRNA. The protein is Sulfur carrier protein TusA of Allochromatium vinosum (strain ATCC 17899 / DSM 180 / NBRC 103801 / NCIMB 10441 / D) (Chromatium vinosum).